The sequence spans 534 residues: Arginine--tRNA ligase (534 aa).

The 'HIGH' region signature appears at 120–130 (ANPTGFLHLGH).

This sequence belongs to the class-I aminoacyl-tRNA synthetase family. In terms of assembly, monomer.

Its subcellular location is the cytoplasm. The catalysed reaction is tRNA(Arg) + L-arginine + ATP = L-arginyl-tRNA(Arg) + AMP + diphosphate. The chain is Arginine--tRNA ligase from Mesomycoplasma hyopneumoniae (strain 7448) (Mycoplasma hyopneumoniae).